A 410-amino-acid polypeptide reads, in one-letter code: Tryptophan synthase beta chain (410 aa).

N6-(pyridoxal phosphate)lysine is present on lysine 98.

Belongs to the TrpB family. In terms of assembly, tetramer of two alpha and two beta chains. Pyridoxal 5'-phosphate is required as a cofactor.

The catalysed reaction is (1S,2R)-1-C-(indol-3-yl)glycerol 3-phosphate + L-serine = D-glyceraldehyde 3-phosphate + L-tryptophan + H2O. It participates in amino-acid biosynthesis; L-tryptophan biosynthesis; L-tryptophan from chorismate: step 5/5. Its function is as follows. The beta subunit is responsible for the synthesis of L-tryptophan from indole and L-serine. In Dinoroseobacter shibae (strain DSM 16493 / NCIMB 14021 / DFL 12), this protein is Tryptophan synthase beta chain.